Consider the following 217-residue polypeptide: Somatotropin (217 aa).

Positions 1-26 (MMAAGPRTSLLLAFALLCLPWTQVVG) are cleaved as a signal peptide. Histidine 46 contributes to the Zn(2+) binding site. Residues cysteine 79 and cysteine 190 are joined by a disulfide bond. Serine 132 bears the Phosphoserine mark. Zn(2+) is bound at residue glutamate 199. Cysteine 207 and cysteine 215 form a disulfide bridge.

Belongs to the somatotropin/prolactin family.

The protein localises to the secreted. Plays an important role in growth control. Its major role in stimulating body growth is to stimulate the liver and other tissues to secrete IGF1. It stimulates both the differentiation and proliferation of myoblasts. It also stimulates amino acid uptake and protein synthesis in muscle and other tissues. The polypeptide is Somatotropin (GH1) (Bubalus bubalis (Domestic water buffalo)).